A 122-amino-acid polypeptide reads, in one-letter code: Large ribosomal subunit protein uL14 (122 aa).

It belongs to the universal ribosomal protein uL14 family. Part of the 50S ribosomal subunit. Forms a cluster with proteins L3 and L19. In the 70S ribosome, L14 and L19 interact and together make contacts with the 16S rRNA in bridges B5 and B8.

Its function is as follows. Binds to 23S rRNA. Forms part of two intersubunit bridges in the 70S ribosome. The protein is Large ribosomal subunit protein uL14 of Elusimicrobium minutum (strain Pei191).